The primary structure comprises 328 residues: Formimidoylglutamase (328 aa).

Mn(2+) contacts are provided by His133, Asp159, His161, Asp163, Asp253, and Asp255.

Belongs to the arginase family. Mn(2+) serves as cofactor.

The catalysed reaction is N-formimidoyl-L-glutamate + H2O = formamide + L-glutamate. Its pathway is amino-acid degradation; L-histidine degradation into L-glutamate; L-glutamate from N-formimidoyl-L-glutamate (hydrolase route): step 1/1. Its function is as follows. Catalyzes the conversion of N-formimidoyl-L-glutamate to L-glutamate and formamide. This is Formimidoylglutamase from Streptococcus pyogenes serotype M3 (strain ATCC BAA-595 / MGAS315).